A 293-amino-acid chain; its full sequence is UDP-3-O-acyl-N-acetylglucosamine deacetylase (293 aa).

Positions 79, 236, and 240 each coordinate Zn(2+). His263 (proton donor) is an active-site residue.

It belongs to the LpxC family. Requires Zn(2+) as cofactor.

The catalysed reaction is a UDP-3-O-[(3R)-3-hydroxyacyl]-N-acetyl-alpha-D-glucosamine + H2O = a UDP-3-O-[(3R)-3-hydroxyacyl]-alpha-D-glucosamine + acetate. The protein operates within glycolipid biosynthesis; lipid IV(A) biosynthesis; lipid IV(A) from (3R)-3-hydroxytetradecanoyl-[acyl-carrier-protein] and UDP-N-acetyl-alpha-D-glucosamine: step 2/6. Functionally, catalyzes the hydrolysis of UDP-3-O-myristoyl-N-acetylglucosamine to form UDP-3-O-myristoylglucosamine and acetate, the committed step in lipid A biosynthesis. This is UDP-3-O-acyl-N-acetylglucosamine deacetylase from Phenylobacterium zucineum (strain HLK1).